Reading from the N-terminus, the 494-residue chain is Tyrosinase (494 aa).

The Cu cation site is built by H38, H53, C64, H224, H228, and H256.

Belongs to the tyrosinase family. The cofactor is Cu(2+).

It catalyses the reaction 2 L-dopa + O2 = 2 L-dopaquinone + 2 H2O. The catalysed reaction is L-tyrosine + O2 = L-dopaquinone + H2O. The chain is Tyrosinase (mepA) from Rhizobium meliloti (Ensifer meliloti).